The primary structure comprises 1386 residues: DNA-directed RNA polymerase subunit beta (1386 aa).

The protein belongs to the RNA polymerase beta chain family. In plastids the minimal PEP RNA polymerase catalytic core is composed of four subunits: alpha, beta, beta', and beta''. When a (nuclear-encoded) sigma factor is associated with the core the holoenzyme is formed, which can initiate transcription.

The protein resides in the plastid. Its subcellular location is the chloroplast. It carries out the reaction RNA(n) + a ribonucleoside 5'-triphosphate = RNA(n+1) + diphosphate. Its function is as follows. DNA-dependent RNA polymerase catalyzes the transcription of DNA into RNA using the four ribonucleoside triphosphates as substrates. The sequence is that of DNA-directed RNA polymerase subunit beta from Thalassiosira pseudonana (Marine diatom).